The following is a 329-amino-acid chain: Sulfate/thiosulfate import ATP-binding protein CysA (329 aa).

The ABC transporter domain occupies 3–237; it reads IEIRNVSKNF…PASDFVYHFL (235 aa). An ATP-binding site is contributed by 35 to 42; that stretch reads GPSGCGKT.

It belongs to the ABC transporter superfamily. Sulfate/tungstate importer (TC 3.A.1.6) family. As to quaternary structure, the complex is composed of two ATP-binding proteins (CysA), two transmembrane proteins (CysT and CysW) and a solute-binding protein (CysP).

The protein resides in the cell inner membrane. It carries out the reaction sulfate(out) + ATP + H2O = sulfate(in) + ADP + phosphate + H(+). It catalyses the reaction thiosulfate(out) + ATP + H2O = thiosulfate(in) + ADP + phosphate + H(+). In terms of biological role, part of the ABC transporter complex CysAWTP involved in sulfate/thiosulfate import. Responsible for energy coupling to the transport system. In Pseudomonas aeruginosa (strain ATCC 15692 / DSM 22644 / CIP 104116 / JCM 14847 / LMG 12228 / 1C / PRS 101 / PAO1), this protein is Sulfate/thiosulfate import ATP-binding protein CysA.